The following is a 207-amino-acid chain: Fibroblast growth factor 18 (207 aa).

Residues 1–27 (MYSAPSTCTCLCLHFLLLCFQVQVLAA) form the signal peptide. Asn-39 carries an N-linked (GlcNAc...) asparagine glycan. Residues Cys-109 and Cys-127 are joined by a disulfide bond. Residue Asn-137 is glycosylated (N-linked (GlcNAc...) asparagine).

It belongs to the heparin-binding growth factors family. Interacts with FGFR3 and FGFR4.

It localises to the secreted. In terms of biological role, plays an important role in the regulation of cell proliferation, cell differentiation and cell migration. Required for normal ossification and bone development. Stimulates hepatic and intestinal proliferation. This chain is Fibroblast growth factor 18 (FGF18), found in Bos taurus (Bovine).